The primary structure comprises 205 residues: Ribosome maturation factor RimP (205 aa).

Belongs to the RimP family.

It localises to the cytoplasm. In terms of biological role, required for maturation of 30S ribosomal subunits. The sequence is that of Ribosome maturation factor RimP from Sinorhizobium medicae (strain WSM419) (Ensifer medicae).